A 365-amino-acid polypeptide reads, in one-letter code: Succinyl-diaminopimelate desuccinylase (365 aa).

Residue His64 coordinates Zn(2+). The active site involves Asp66. Zn(2+) is bound at residue Asp95. Residue Glu125 is the Proton acceptor of the active site. Zn(2+) is bound by residues Glu126, Glu154, and His339.

This sequence belongs to the peptidase M20A family. DapE subfamily. Homodimer. Requires Zn(2+) as cofactor. It depends on Co(2+) as a cofactor.

It carries out the reaction N-succinyl-(2S,6S)-2,6-diaminopimelate + H2O = (2S,6S)-2,6-diaminopimelate + succinate. It participates in amino-acid biosynthesis; L-lysine biosynthesis via DAP pathway; LL-2,6-diaminopimelate from (S)-tetrahydrodipicolinate (succinylase route): step 3/3. Its function is as follows. Catalyzes the hydrolysis of N-succinyl-L,L-diaminopimelic acid (SDAP), forming succinate and LL-2,6-diaminopimelate (DAP), an intermediate involved in the bacterial biosynthesis of lysine and meso-diaminopimelic acid, an essential component of bacterial cell walls. The sequence is that of Succinyl-diaminopimelate desuccinylase from Sulfurimonas denitrificans (strain ATCC 33889 / DSM 1251) (Thiomicrospira denitrificans (strain ATCC 33889 / DSM 1251)).